A 789-amino-acid polypeptide reads, in one-letter code: SH3 domain-containing protein 19 (789 aa).

Disordered regions lie at residues 24–170 (TNTE…PPRL), 209–404 (DDDV…RPKP), and 472–497 (TPLDERPRGRPNDSGHSQKPVDSGAP). The residue at position 65 (serine 65) is a Phosphoserine. Basic and acidic residues predominate over residues 296 to 305 (SHSDRTRNPE). Positions 335–351 (WRPPPKGAPERPPPPKL) are enriched in pro residues. The span at 352 to 361 (PASKSSNKNL) shows a compositional bias: low complexity. Serine 368 is subject to Phosphoserine. 5 consecutive SH3 domains span residues 414–476 (LSVP…PLDE), 494–553 (SGAP…VIVD), 570–629 (AKGP…LVGD), 660–719 (PPGE…PCPA), and 729–788 (PKGR…FLQV). Over residues 474–484 (LDERPRGRPND) the composition is skewed to basic and acidic residues. Residues 635–663 (ANILSTKVPPKTKNEDPGSNSQDSSPPGE) form a disordered region.

Interacts with ADAM12. Isoform 2 (but not isoform 1) interacts with ADAM9, ADAM10, ADAM15 and ADAM17. Interacts with SH3GL1 SH3 domain. Interacts via SH3 3 and SH3 4 or SH3 4 and SH3 5 domains with SOS2. Probably forms a trimeric complex with SH3GL1 and SOS2. Interacts with SH3YL1. As to expression, expressed in hair follicles.

The protein localises to the cytoplasm. Its function is as follows. May play a role in regulating A disintegrin and metalloproteases (ADAMs) in the signaling of EGFR-ligand shedding. May be involved in suppression of Ras-induced cellular transformation and Ras-mediated activation of ELK1. Plays a role in the regulation of cell morphology and cytoskeletal organization. This chain is SH3 domain-containing protein 19 (Sh3d19), found in Mus musculus (Mouse).